The chain runs to 253 residues: Sulfate transporter CysZ (253 aa).

Transmembrane regions (helical) follow at residues 31–51 (FVIL…WWLF), 75–95 (LLWP…FSTI), 151–171 (IVLL…PVLW), and 222–242 (IPLL…AMWV).

The protein belongs to the CysZ family.

It is found in the cell inner membrane. High affinity, high specificity proton-dependent sulfate transporter, which mediates sulfate uptake. Provides the sulfur source for the cysteine synthesis pathway. This Escherichia coli O81 (strain ED1a) protein is Sulfate transporter CysZ.